We begin with the raw amino-acid sequence, 193 residues long: Protein B4 (193 aa).

3 helical membrane passes run 15-35 (FFVC…CVFF), 36-56 (CVYF…VFFV), and 160-180 (LSLC…IVFS).

The protein resides in the host membrane. The sequence is that of Protein B4 (B4) from Homo sapiens (Human).